The chain runs to 98 residues: YcgL domain-containing protein Ping_1076 (98 aa).

The YcgL domain occupies 1–85 (MLCAVYKSIR…PPVNHLQEHK (85 aa)). The segment at 75-98 (PPPVNHLQEHKDWKKKRQENKNEI) is disordered.

This chain is YcgL domain-containing protein Ping_1076, found in Psychromonas ingrahamii (strain DSM 17664 / CCUG 51855 / 37).